A 191-amino-acid polypeptide reads, in one-letter code: MYVVLEGVDGVGKSTQVGLLKDRFKNALFTKEPGGTKMGESLRHIALNENISELARAFLFLSDRAEHTESVIKPALKEKRLIISDRSLISGMAYSEFSSLELNLLATQSVLPAKIILLVIDKEGLKQRLSLKSLDKIENQGTEKLLTIQQKLKTHAHALQEKFGCEVLELDAQKSVGDLHRQIAAFIECVV.

7-14 (GVDGVGKS) contacts ATP.

Belongs to the thymidylate kinase family.

The catalysed reaction is dTMP + ATP = dTDP + ADP. In terms of biological role, phosphorylation of dTMP to form dTDP in both de novo and salvage pathways of dTTP synthesis. This is Thymidylate kinase from Helicobacter pylori (strain HPAG1).